The following is a 233-amino-acid chain: Uridylate kinase (233 aa).

9–10 serves as a coordination point for ATP; that stretch reads GS. Gly-43 serves as a coordination point for UMP. ATP contacts are provided by Gly-44 and Arg-48. UMP-binding positions include Asp-65 and 113–119; that span reads VTPGQTT. ATP contacts are provided by Thr-139, Tyr-145, and Asp-148.

It belongs to the UMP kinase family. As to quaternary structure, homohexamer.

The protein localises to the cytoplasm. The catalysed reaction is UMP + ATP = UDP + ADP. It participates in pyrimidine metabolism; CTP biosynthesis via de novo pathway; UDP from UMP (UMPK route): step 1/1. Its activity is regulated as follows. Inhibited by UTP. Its function is as follows. Catalyzes the reversible phosphorylation of UMP to UDP. This is Uridylate kinase from Methanosarcina mazei (strain ATCC BAA-159 / DSM 3647 / Goe1 / Go1 / JCM 11833 / OCM 88) (Methanosarcina frisia).